A 647-amino-acid polypeptide reads, in one-letter code: MGQTKSKIKSKYASYLSFIKILLKRGGVKVSTKNLIKLFQIIEQFCPWFPEQGTLDLKDWKRIGKELKQAGRKGNIIPLTVWNDWAIIKAALEPFQTEEDSISVSDAPGSCLIDCNENTRKKSQKETESLHCEYVAEPVMAQSTQNVDYNQLQEVIYPETLKLEGKGPELVGPSESKPRGTSPLPAGQVPVTLQPQKQVKENKTQPPVAYQYWPPAELQYRPPPESQYGYPGMPPAPQGREPYPQPPTRRLNPTAPPSRQGSELHEIIDKSRKEGDTEAWQFPVTLEPMPPGEGAQEGEPPTVEARYKSFSIKMLKDMKEGVKQYGPNSPYMRTLLDSIAHGHRLIPYDWEILAKSSLSPSQFLQFKTWWIDGVQEQVRRNRAANPPVNIDADQLLGIGQNWSTISQQALMQNEAIEQVRAICLRAWEKIQDPGSTCPSFNTVRQGSKEPYPDFVARLQDVAQKSIADEKARKVIVELMAYENANPECQSAIKPLKGKVPAGSDVISEYVKACDGIGGAMHKAMLMAQAITGVVLGGQVRTFGGKCYNCGQIGHLKKNCPVLNKQNITIQATTTGREPPDLCPRCKKGKHWASQCRSKFDKNGQPLSGNEQRGQPQAPQQTGAFPIQPFVPQGFQDNNPHCPKCFRE.

Gly-2 is lipidated: N-myristoyl glycine. A disordered region spans residues 165-264 (GKGPELVGPS…APPSRQGSEL (100 aa)). Over residues 232–247 (GMPPAPQGREPYPQPP) the composition is skewed to pro residues. 2 consecutive CCHC-type zinc fingers follow at residues 544-561 (GKCY…NCPV) and 580-597 (DLCP…QCRS). The segment at 598–641 (KFDKNGQPLSGNEQRGQPQAPQQTGAFPIQPFVPQGFQDNNPHC) is disordered. The span at 604 to 622 (QPLSGNEQRGQPQAPQQTG) shows a compositional bias: polar residues.

Belongs to the beta type-B retroviral Gag protein family. HERV class-II K(HML-2) gag subfamily. In terms of processing, myristoylation is essential for retroviral assembly. Alteration of the glycine residue leads to a block in the budding of particles and an accumulation of Gag inside the cell. Post-translationally, specific enzymatic cleavages may yield mature proteins.

It is found in the cell membrane. Its function is as follows. The products of the Gag polyproteins of infectious retroviruses perform highly complex orchestrated tasks during the assembly, budding, maturation, and infection stages of the viral replication cycle. During viral assembly, the proteins form membrane associations and self-associations that ultimately result in budding of an immature virion from the infected cell. Gag precursors also function during viral assembly to selectively bind and package two plus strands of genomic RNA. Endogenous Gag proteins may have kept, lost or modified their original function during evolution. The sequence is that of Endogenous retrovirus group K member 8 Gag polyprotein (ERVK-8) from Homo sapiens (Human).